A 318-amino-acid chain; its full sequence is NADH-ubiquinone oxidoreductase chain 1 (318 aa).

A run of 8 helical transmembrane segments spans residues 2–22 (FMIN…FLTL), 68–88 (ISMF…MWIP), 100–120 (LGVL…LWSG), 147–167 (AIIL…TLII), 172–192 (VWLI…TLAE), 217–237 (AGPF…MNIF), 253–273 (ELYT…FLWI), and 294–314 (LPLT…LSSI).

Belongs to the complex I subunit 1 family.

Its subcellular location is the mitochondrion inner membrane. It carries out the reaction a ubiquinone + NADH + 5 H(+)(in) = a ubiquinol + NAD(+) + 4 H(+)(out). Its function is as follows. Core subunit of the mitochondrial membrane respiratory chain NADH dehydrogenase (Complex I) that is believed to belong to the minimal assembly required for catalysis. Complex I functions in the transfer of electrons from NADH to the respiratory chain. The immediate electron acceptor for the enzyme is believed to be ubiquinone. This chain is NADH-ubiquinone oxidoreductase chain 1 (MT-ND1), found in Ovis aries (Sheep).